The primary structure comprises 412 residues: FAD-dependent monooxygenase nscC (412 aa).

The N-terminal stretch at 1–21 (MGKQQETILIIGAGIAGLTTS) is a signal peptide. Positions 35 and 46 each coordinate FAD. Asparagine 92 carries N-linked (GlcNAc...) asparagine glycosylation. Arginine 119 is an FAD binding site. 2 N-linked (GlcNAc...) asparagine glycosylation sites follow: asparagine 170 and asparagine 231. Residues aspartate 326 and glycine 339 each coordinate FAD.

The protein belongs to the paxM FAD-dependent monooxygenase family. FAD serves as cofactor.

It participates in secondary metabolite biosynthesis. Its function is as follows. FAD-dependent monooxygenase; part of the gene cluster that mediates the biosynthesis of neosartoricin B, a prenylated anthracenone that probably exhibits T-cell antiproliferative activity, suggestive of a physiological role as an immunosuppressive agent. The non-reducing polyketide synthase nscA probably synthesizes and cyclizes the decaketide backbone. The hydrolase nscB then mediates the product release through hydrolysis followed by spontaneous decarboxylation. The prenyltransferase nscD catalyzes the addition of the dimethylallyl group to the aromatic C5. The FAD-dependent monooxygenase nscC is then responsible for the stereospecific hydroxylation at C2. Neosartoricin B can be converted into two additional compounds neosartoricins C and D. Neosartoricin C is a spirocyclic compound that is cyclized through the attack of C3 hydroxyl on C14, followed by dehydration. On the other hand, neosartoricin D is a further cyclized compound in which attack of C2 on C14 in neosartoricin C results in the formation of the acetal-containing dioxabicyclo-octanone ring. Both of these compounds are novel and possibly represent related metabolites of the gene cluster. This chain is FAD-dependent monooxygenase nscC, found in Trichophyton verrucosum (strain HKI 0517).